Consider the following 655-residue polypeptide: A-type voltage-gated potassium channel KCND3 (655 aa).

Residues 1-182 (MAAGVAAWLP…FENPHTSTLA (182 aa)) are Cytoplasmic-facing. The tract at residues 6 to 21 (AAWLPFARAAAIGWMP) is interaction with KCNIP1 and KCNIP2. The interaction with KCNIP1 stretch occupies residues 70 to 78 (EKEFFFNED). Zn(2+) contacts are provided by His-104, Cys-110, Cys-131, and Cys-132. Ser-153 carries the phosphoserine modification. The chain crosses the membrane as a helical span at residues 183–204 (LVFYYVTGFFIAVSVITNVVET). At 205–223 (VPCGTVPGSKELPCGERYS) the chain is on the extracellular side. The helical transmembrane segment at 224 to 246 (VAFFCLDTACVMIFTVEYLLRLF) threads the bilayer. Residues 247-253 (AAPSRYR) are Cytoplasmic-facing. Residues 254–277 (FIRSVMSIIDVVAIMPYYIGLVMT) form a helical membrane-spanning segment. Over 278–283 (NNEDVS) the chain is Extracellular. Residues 284 to 306 (GAFVTLRVFRVFRIFKFSRHSQG) form a helical; Voltage-sensor membrane-spanning segment. Residues 307–318 (LRILGYTLKSCA) are Cytoplasmic-facing. A helical transmembrane segment spans residues 319–343 (SELGFLLFSLTMAIIIFATVMFYAE). Residues 344-352 (KGSSASKFT) lie on the Extracellular side of the membrane. An intramembrane region (helical) is located at residues 353–366 (SIPASFWYTIVTMT). Residues Thr-367, Leu-368, Gly-369, and Tyr-370 each contribute to the K(+) site. A Selectivity filter motif is present at residues 367-372 (TLGYGD). Residues 367–374 (TLGYGDMV) lie within the membrane without spanning it. The helical transmembrane segment at 378–400 (IAGKIFGSICSLSGVLVIALPVP) threads the bilayer. Over 401 to 655 (VIVSNFSRIY…ASNVVKVSVL (255 aa)) the chain is Cytoplasmic. Thr-459 bears the Phosphothreonine mark. The tract at residues 470–487 (SLIESQHHHLLHCLEKTT) is interaction with KCNIP1 and KCNIP2. The segment at 472–487 (IESQHHHLLHCLEKTT) is mediates dendritic targeting. Ser-569 is subject to Phosphoserine; by CaMK2D. A Phosphoserine modification is found at Ser-585. The segment at 618–644 (PAPPALTPEGETRPPPASPGPNTNIPS) is disordered.

This sequence belongs to the potassium channel family. D (Shal) (TC 1.A.1.2) subfamily. Kv4.3/KCND3 sub-subfamily. In terms of assembly, homotetramer. Heterotetramer with KCND2. Associates with the regulatory subunits KCNIP3 and KCNIP4. Interacts with KCNE1, KCNE2, SCN1B and KCNAB1 and DLG1. Component of heteromultimeric potassium channels. Identified in potassium channel complexes containing KCND1, KCND2, KCND3, KCNIP1, KCNIP2, KCNIP3, KCNIP4, DPP6 and DPP10. Interacts with KCNIP1; each KCNIP1 monomer interacts with two adjacent KCND3 subunits, through both the N-terminal inactivation ball of a KCND3 subunit and a C-terminal helix from the adjacent KCND3 subunit, clamping them together; this interaction stabilizes the tetrameric form and modulates the channel gating kinetics namely channel activation and inactivation kinetics and rate of recovery from inactivation. Interacts with DPP6; this interaction modulates the channel gating kinetics namely channel activation and inactivation kinetics and rate of recovery from inactivation. Interacts with KCNIP2; each KCNIP2 monomer interacts with two adjacent KCND3 subunits, through both the N-terminal inactivation ball of a KCND3 subunit and a C-terminal helix from the adjacent KCND3 subunit, clamping them together; this interaction modulates the channel gating kinetics. Regulated through phosphorylation at Ser-569 by CaMK2D. As to expression, detected in carotid body chemoreceptor cells and in frontal cortex.

Its subcellular location is the cell membrane. The protein localises to the sarcolemma. It localises to the cell projection. It is found in the dendrite. The enzyme catalyses K(+)(in) = K(+)(out). Its function is as follows. Pore-forming (alpha) subunit of voltage-gated A-type potassium channels that mediates transmembrane potassium transport in excitable membranes, in brain and heart. In cardiomyocytes, may generate the transient outward potassium current I(To). In neurons, may conduct the transient subthreshold somatodendritic A-type potassium current (ISA). Kinetics properties are characterized by fast activation at subthreshold membrane potentials, rapid inactivation, and quick recovery from inactivation. Channel properties are modulated by interactions with regulatory subunits. Interaction with the regulatory subunits KCNIP1 or KCNIP2 modulates the channel gating kinetics namely channel activation and inactivation kinetics and rate of recovery from inactivation. Likewise, interaction with DPP6 modulates the channel gating kinetics namely channel activation and inactivation kinetics. This chain is A-type voltage-gated potassium channel KCND3, found in Oryctolagus cuniculus (Rabbit).